A 328-amino-acid polypeptide reads, in one-letter code: Isopenicillin N synthase (328 aa).

Residues Arg85, Tyr89, Ser181, and Tyr187 each contribute to the isopenicillin N site. Residues Arg85, Tyr89, Ser181, Tyr187, His210, and Asp212 each coordinate N-[(5S)-5-amino-5-carboxypentanoyl]-L-cysteinyl-D-valine. One can recognise a Fe2OG dioxygenase domain in the interval 178 to 284; sequence TLSSVSLIRY…RLSLPFFFHA (107 aa). Residues His210, Asp212, and His266 each contribute to the Fe(2+) site. Arg275 is a binding site for 2-oxoglutarate. Residue Ser277 participates in isopenicillin N binding. Ser277 is an N-[(5S)-5-amino-5-carboxypentanoyl]-L-cysteinyl-D-valine binding site.

This sequence belongs to the iron/ascorbate-dependent oxidoreductase family. The cofactor is Fe cation. It depends on L-ascorbate as a cofactor.

It catalyses the reaction N-[(5S)-5-amino-5-carboxypentanoyl]-L-cysteinyl-D-valine + O2 = isopenicillin N + 2 H2O. It functions in the pathway antibiotic biosynthesis; penicillin G biosynthesis; penicillin G from L-alpha-aminoadipate and L-cysteine and L-valine: step 2/3. Removes, in the presence of oxygen, 4 hydrogen atoms from delta-L-(alpha-aminoadipyl)-L-cysteinyl-D-valine (ACV) to form the azetidinone and thiazolidine rings of isopenicillin. This chain is Isopenicillin N synthase (pcbC), found in Amycolatopsis lactamdurans (Nocardia lactamdurans).